The following is a 526-amino-acid chain: Acid-sensing ion channel 1 (526 aa).

Residues 1-49 (MELKTEEEEVGGVQPVSIQAFASSSTLHGLAHIFSYERLSLKRALWALC) are Cytoplasmic-facing. Residues 50–66 (FLGSLAVLLCVCTERVQ) traverse the membrane as a helical segment. Residues 67 to 425 (YYFCYHHVTK…ETIEQKKAYE (359 aa)) lie on the Extracellular side of the membrane. Disulfide bonds link cysteine 93/cysteine 194, cysteine 172/cysteine 179, cysteine 290/cysteine 365, cysteine 308/cysteine 361, cysteine 312/cysteine 359, cysteine 321/cysteine 343, and cysteine 323/cysteine 335. Residues asparagine 366 and asparagine 393 are each glycosylated (N-linked (GlcNAc...) asparagine). A discontinuously helical membrane pass occupies residues 426 to 456 (IAGLLGDIGGQMGLFIGASILTVLELFDYAY). The short motif at 442 to 444 (GAS) is the GAS motif; ion selectivity filter element. Residues 457 to 526 (EVIKHRLCRR…ARGTFEDFTC (70 aa)) lie on the Cytoplasmic side of the membrane. Phosphoserine occurs at positions 477 and 497.

The protein belongs to the amiloride-sensitive sodium channel (TC 1.A.6) family. ASIC1 subfamily. As to quaternary structure, homotrimer. Heterotrimer; with other ASIC proteins producing channel with different properties. Interacts with PICK1; regulates ASIC1 clustering in membranes. Interacts with STOM; alters heterotrimeric ASIC channels activity. In terms of processing, pH-gating could be regulated by serine proteases. Phosphorylation by PKA regulates interaction with PICK1 and subcellular localization. Phosphorylation by PKC may regulate the channel. Expressed in dorsal root ganglia and sciatic nerve (at protein level). Widely distributed throughout the brain. Expressed in olfactory bulb, neo and allocortical regions, dentate granule cells, pyramidal cells of CA1-CA3 subfields of the hippocampal formation, habenula, basolateral amygdaloid nuclei, and in the Purkinje and granule cells of the cerebellum. Diffusely detected over most other regions of the basal ganglia, including thalamic nuclei, substantia nigra, striatum and globus pallidus, hypothalamus, midbrain, pons, medulla and choroid plexus. In terms of tissue distribution, expressed only in dorsal root ganglion (DRG). As to expression, expressed exclusively in trigeminal ganglion and dorsal root ganglion.

It is found in the cell membrane. Its subcellular location is the postsynaptic cell membrane. The protein localises to the cell projection. The protein resides in the dendrite. It catalyses the reaction Na(+)(in) = Na(+)(out). The catalysed reaction is Li(+)(in) = Li(+)(out). It carries out the reaction K(+)(in) = K(+)(out). The enzyme catalyses Ca(2+)(in) = Ca(2+)(out). It catalyses the reaction H(+)(in) = H(+)(out). With respect to regulation, inhibited by the diuretic drug amiloride. External calcium is required to potentiate proton activation of ASIC1 at physiological concentrations, but at higher, non-physiological concentrations, it inhibits activation. Also potentiated by other multivalent cations like Mg(2+), Ba(2+). Activated by FMRFamide-related neuropeptides. Inhibited by anti-inflammatory drugs like salicylic acid. The spider venom psalmotoxin-1 specifically inhibits the ASIC1 homotrimer. The snake venom mambalgin-1, mambalgin-2 and mambalgin-3 inhibit the homotrimer of Asic1a (ASIC1 isoform 1). The snake venom mambalgin-1 and mambalgin-2 inhibit heterotrimers of Asic1a-Asic1b (ASIC1 isoform 1-ASIC1 isoform 3). Heterotrimer of Asic1a-Asic2a is inhibited by the snake venom mambalgin-1, mambalgin-2 and mambalgin-3. Heterotrimer of Asic1a-Asic2b is inhibited by the snake venom mambalgin-1 and mambalgin-2. The spider venom Pi-theraphotoxin-Hm3a inhibits the homotrimer of Asic1a (ASIC1 isoform 1). The spider venom Pi-theraphotoxin-Hm3a inhibits heterotrimers of Asic1a-Asic1b (ASIC1 isoform 1-ASIC1 isoform 3). The spider venom Pi-hexatoxin-Hi1a inhibits the ASIC1 homotrimer. Its activity is regulated as follows. Not inhibited by extracellular calcium. Its function is as follows. Forms voltage-independent, pH-gated trimeric sodium channels that act as postsynaptic excitatory receptors in the nervous system, playing a crucial role in regulating synaptic plasticity, learning, and memory. Upon extracellular pH drop this channel elicits transient, fast activating, and completely desensitizing inward currents. Displays high selectivity for sodium ions but can also permit the permeation of other cations. Regulates more or less directly intracellular calcium concentration and CaMKII phosphorylation, and thereby the density of dendritic spines. Modulates neuronal activity in the circuits underlying innate fear. Functionally, permeable to other cations including calcium, lithium and potassium. In terms of biological role, pH activation and steady-state inactivation are shifted to more acidic values. Forms channels that are not permeable to calcium as it discrimates stronger between monovalent cations. Has no pH-gated sodium channel activity per se but can associate with other ASICs and regulate their pH-sensitivity. The sequence is that of Acid-sensing ion channel 1 from Rattus norvegicus (Rat).